Reading from the N-terminus, the 302-residue chain is Orotidine 5'-phosphate decarboxylase (302 aa).

The active-site Proton donor is K105.

Belongs to the OMP decarboxylase family. Type 2 subfamily.

It catalyses the reaction orotidine 5'-phosphate + H(+) = UMP + CO2. Its pathway is pyrimidine metabolism; UMP biosynthesis via de novo pathway; UMP from orotate: step 2/2. The sequence is that of Orotidine 5'-phosphate decarboxylase from Rhodopirellula baltica (strain DSM 10527 / NCIMB 13988 / SH1).